A 375-amino-acid polypeptide reads, in one-letter code: Chaperone protein DnaJ (375 aa).

Residues 5–70 (DYYEVLGVER…GKRMAYDQYG (66 aa)) enclose the J domain. The CR-type zinc-finger motif lies at 134–212 (GTTVTIRVPT…CHGQGRVEEH (79 aa)). Positions 147, 150, 164, 167, 186, 189, 200, and 203 each coordinate Zn(2+). CXXCXGXG motif repeat units lie at residues 147 to 154 (CKTCDGSG), 164 to 171 (CTTCGGIG), 186 to 193 (CPRCHGSG), and 200 to 207 (CPDCHGQG).

Belongs to the DnaJ family. Homodimer. It depends on Zn(2+) as a cofactor.

The protein localises to the cytoplasm. Participates actively in the response to hyperosmotic and heat shock by preventing the aggregation of stress-denatured proteins and by disaggregating proteins, also in an autonomous, DnaK-independent fashion. Unfolded proteins bind initially to DnaJ; upon interaction with the DnaJ-bound protein, DnaK hydrolyzes its bound ATP, resulting in the formation of a stable complex. GrpE releases ADP from DnaK; ATP binding to DnaK triggers the release of the substrate protein, thus completing the reaction cycle. Several rounds of ATP-dependent interactions between DnaJ, DnaK and GrpE are required for fully efficient folding. Also involved, together with DnaK and GrpE, in the DNA replication of plasmids through activation of initiation proteins. The polypeptide is Chaperone protein DnaJ (Azotobacter vinelandii (strain DJ / ATCC BAA-1303)).